The primary structure comprises 343 residues: Methionine import ATP-binding protein MetN 1 (343 aa).

In terms of domain architecture, ABC transporter spans 2–241 (IKLSNITKVF…PKTPLAQKFI (240 aa)). 38–45 (GASGAGKS) contributes to the ATP binding site.

Belongs to the ABC transporter superfamily. Methionine importer (TC 3.A.1.24) family. As to quaternary structure, the complex is composed of two ATP-binding proteins (MetN), two transmembrane proteins (MetI) and a solute-binding protein (MetQ).

Its subcellular location is the cell inner membrane. The enzyme catalyses L-methionine(out) + ATP + H2O = L-methionine(in) + ADP + phosphate + H(+). It carries out the reaction D-methionine(out) + ATP + H2O = D-methionine(in) + ADP + phosphate + H(+). In terms of biological role, part of the ABC transporter complex MetNIQ involved in methionine import. Responsible for energy coupling to the transport system. The chain is Methionine import ATP-binding protein MetN 1 from Salmonella paratyphi A (strain ATCC 9150 / SARB42).